Consider the following 167-residue polypeptide: Anaerobic nitrite reductase NSHB4 (167 aa).

Positions 12 to 162 constitute a Globin domain; it reads RFTEEQEALV…LVAAIKEGMK (151 aa). Positions 45-49 match the Homodimerization motif; the sequence is EVAPS. Positions 55, 73, 103, 107, and 108 each coordinate heme b. A Homodimerization motif is present at residues 115–127; the sequence is DTHFEVARFALLE.

The protein belongs to the plant globin family. As to quaternary structure, homodimer. The cofactor is heme b.

It localises to the cytoplasm. The protein localises to the nucleus. It carries out the reaction Fe(III)-heme b-[protein] + nitric oxide + H2O = Fe(II)-heme b-[protein] + nitrite + 2 H(+). In terms of biological role, phytoglobin that reduces nitrite to nitric oxide under anoxic conditions (e.g. during flooding or in waterlogged soil). May not function as an oxygen storage or transport protein. Has an unusually high affinity for O(2) through an hexacoordinate heme iron because of a very low dissociation constant. The sequence is that of Anaerobic nitrite reductase NSHB4 from Oryza sativa subsp. indica (Rice).